The primary structure comprises 308 residues: Porphobilinogen deaminase (308 aa).

Position 240 is an S-(dipyrrolylmethanemethyl)cysteine (Cys240).

Belongs to the HMBS family. As to quaternary structure, monomer. Dipyrromethane is required as a cofactor.

The enzyme catalyses 4 porphobilinogen + H2O = hydroxymethylbilane + 4 NH4(+). The protein operates within porphyrin-containing compound metabolism; protoporphyrin-IX biosynthesis; coproporphyrinogen-III from 5-aminolevulinate: step 2/4. Tetrapolymerization of the monopyrrole PBG into the hydroxymethylbilane pre-uroporphyrinogen in several discrete steps. The protein is Porphobilinogen deaminase of Campylobacter lari (strain RM2100 / D67 / ATCC BAA-1060).